The chain runs to 247 residues: Adenosylcobinamide-GDP ribazoletransferase (247 aa).

6 helical membrane passes run isoleucine 34–leucine 54, cysteine 59–phenylalanine 79, glycine 113–leucine 133, methionine 138–tyrosine 158, valine 171–valine 191, and valine 194–isoleucine 214.

Belongs to the CobS family. Requires Mg(2+) as cofactor.

Its subcellular location is the cell inner membrane. It carries out the reaction alpha-ribazole + adenosylcob(III)inamide-GDP = adenosylcob(III)alamin + GMP + H(+). The catalysed reaction is alpha-ribazole 5'-phosphate + adenosylcob(III)inamide-GDP = adenosylcob(III)alamin 5'-phosphate + GMP + H(+). It functions in the pathway cofactor biosynthesis; adenosylcobalamin biosynthesis; adenosylcobalamin from cob(II)yrinate a,c-diamide: step 7/7. In terms of biological role, joins adenosylcobinamide-GDP and alpha-ribazole to generate adenosylcobalamin (Ado-cobalamin). Also synthesizes adenosylcobalamin 5'-phosphate from adenosylcobinamide-GDP and alpha-ribazole 5'-phosphate. This is Adenosylcobinamide-GDP ribazoletransferase from Salmonella schwarzengrund (strain CVM19633).